Reading from the N-terminus, the 29-residue chain is Dermaseptin-S5 (29 aa).

The protein belongs to the frog skin active peptide (FSAP) family. Dermaseptin subfamily. Expressed by the skin glands.

It is found in the secreted. Potent antimicrobial peptide with activity against bacteria and protozoa. Also has activity against fungi. Probably acts by disturbing membrane functions with its amphipathic structure. In Phyllomedusa sauvagei (Sauvage's leaf frog), this protein is Dermaseptin-S5.